Reading from the N-terminus, the 409-residue chain is Tyrosine--tRNA ligase (409 aa).

L-tyrosine is bound at residue Y35. The short motif at 40 to 49 is the 'HIGH' region element; sequence PTGSSLHVGH. The L-tyrosine site is built by Y168 and Q172. Positions 228 to 232 match the 'KMSKS' region motif; sequence KMGKT. Residue K231 participates in ATP binding. Positions 339–404 constitute an S4 RNA-binding domain; it reads IKVTDLFVQV…AGKKRVVRIV (66 aa).

Belongs to the class-I aminoacyl-tRNA synthetase family. TyrS type 1 subfamily. As to quaternary structure, homodimer.

It localises to the cytoplasm. It catalyses the reaction tRNA(Tyr) + L-tyrosine + ATP = L-tyrosyl-tRNA(Tyr) + AMP + diphosphate + H(+). Functionally, catalyzes the attachment of tyrosine to tRNA(Tyr) in a two-step reaction: tyrosine is first activated by ATP to form Tyr-AMP and then transferred to the acceptor end of tRNA(Tyr). The protein is Tyrosine--tRNA ligase of Treponema pallidum (strain Nichols).